An 893-amino-acid chain; its full sequence is 104 kDa microneme/rhoptry antigen (893 aa).

A signal peptide spans 1–19 (MKFLVLLFNILCLFPILGA). 3 disordered regions span residues 492-666 (SKKK…FDPK), 681-799 (KTKE…PTGK), and 818-873 (KEHM…RKPD). Composition is skewed to basic and acidic residues over residues 525–565 (SESK…EHKP) and 573–591 (KRPE…ESPK). Low complexity predominate over residues 595 to 606 (RPVSPQRPVSPK). Basic and acidic residues-rich tracts occupy residues 731-755 (EEVK…DSPT), 788-797 (EAGRILRDPT), and 818-830 (KEHM…KIVV). A compositionally biased stretch (acidic residues) spans 831–841 (DDDGTEADDED). A compositionally biased stretch (basic residues) spans 851–869 (STVRRRRPRPKKSSKSSKP). The GPI-anchor amidated aspartate moiety is linked to residue aspartate 873. Residues 874–893 (SAFVPSIIFIFLVSLIVGIL) constitute a propeptide, removed in mature form.

It is found in the cell membrane. The protein is 104 kDa microneme/rhoptry antigen of Theileria annulata.